The following is a 117-amino-acid chain: uncharacterized protein (117 aa).

Residues 76–96 form a helical membrane-spanning segment; that stretch reads FIMSSGCFLIASLSCVGLTVF.

The protein resides in the membrane. This is an uncharacterized protein from Saccharomyces cerevisiae (strain ATCC 204508 / S288c) (Baker's yeast).